A 428-amino-acid polypeptide reads, in one-letter code: Folylpolyglutamate synthase (428 aa).

49 to 52 (GKGS) serves as a coordination point for ATP. Serine 73 contacts Mg(2+). (6R)-5,10-methylenetetrahydrofolyl-(gamma-L-Glu)n is bound by residues phenylalanine 75 and arginine 82. Glutamate 143 and histidine 170 together coordinate Mg(2+). N6-carboxylysine is present on lysine 185. ATP-binding positions include asparagine 264, arginine 300, and 313 to 316 (DGAH). Serine 417 lines the (6R)-5,10-methylenetetrahydrofolyl-(gamma-L-Glu)n pocket.

This sequence belongs to the folylpolyglutamate synthase family. In terms of assembly, monomer. Mg(2+) serves as cofactor.

It carries out the reaction (6S)-5,6,7,8-tetrahydrofolyl-(gamma-L-Glu)(n) + L-glutamate + ATP = (6S)-5,6,7,8-tetrahydrofolyl-(gamma-L-Glu)(n+1) + ADP + phosphate + H(+). The catalysed reaction is (6R)-5,10-methylenetetrahydrofolyl-(gamma-L-Glu)(n) + L-glutamate + ATP = (6R)-5,10-methylenetetrahydrofolyl-(gamma-L-Glu)(n+1) + ADP + phosphate + H(+). The enzyme catalyses 10-formyltetrahydrofolyl-(gamma-L-Glu)(n) + L-glutamate + ATP = 10-formyltetrahydrofolyl-(gamma-L-Glu)(n+1) + ADP + phosphate + H(+). Competitively inhibited by adenosine 5'-(3-thio)triphosphate and beta,gamma-methylene-ATP. Involved in the conversion of folates to polyglutamate derivatives, and likely functions in the retention of cellular folate pools. Catalyzes successive MgATP-dependent additions of glutamate to a pteroylmonoglutamate substrate, with a high preference for 5,10-methylenetetrahydrofolate (mTHF). Thus, metabolizes mTHF to the tetraglutamate derivative, but longer glutamate chain length products are not observed. Tetrahydrofolate (H4PteGlu) and 10-formyl-H4PteGlu are poorer folate substrates. In contrast to E.coli FolC, this enzyme does not display dihydrofolate synthase activity. The sequence is that of Folylpolyglutamate synthase from Lacticaseibacillus casei (Lactobacillus casei).